The following is a 192-amino-acid chain: Ion-translocating oxidoreductase complex subunit B (192 aa).

Residues 1 to 26 are hydrophobic; the sequence is MTAIWIAIAALSALALAFGLVLGYAS. In terms of domain architecture, 4Fe-4S spans 32–91; that stretch reads ENDPIVEEVEAMLPQSQCGQCGYPGCRPYAEAVSLNGESINKCGPGGEAMMLKLAEKLNV. The [4Fe-4S] cluster site is built by cysteine 49, cysteine 52, cysteine 57, cysteine 74, cysteine 117, cysteine 120, cysteine 123, cysteine 127, cysteine 147, cysteine 150, cysteine 153, and cysteine 157. 4Fe-4S ferredoxin-type domains are found at residues 108–137 and 138–167; these read HVAW…GSTK and AVHT…LRPI.

The protein belongs to the 4Fe4S bacterial-type ferredoxin family. RnfB subfamily. In terms of assembly, the complex is composed of six subunits: RnfA, RnfB, RnfC, RnfD, RnfE and RnfG. It depends on [4Fe-4S] cluster as a cofactor.

Its subcellular location is the cell inner membrane. Functionally, part of a membrane-bound complex that couples electron transfer with translocation of ions across the membrane. This chain is Ion-translocating oxidoreductase complex subunit B, found in Pectobacterium atrosepticum (strain SCRI 1043 / ATCC BAA-672) (Erwinia carotovora subsp. atroseptica).